A 211-amino-acid polypeptide reads, in one-letter code: Uridine kinase (211 aa).

Residue Gly13 to Ser20 coordinates ATP.

This sequence belongs to the uridine kinase family.

It localises to the cytoplasm. The catalysed reaction is uridine + ATP = UMP + ADP + H(+). The enzyme catalyses cytidine + ATP = CMP + ADP + H(+). The protein operates within pyrimidine metabolism; CTP biosynthesis via salvage pathway; CTP from cytidine: step 1/3. Its pathway is pyrimidine metabolism; UMP biosynthesis via salvage pathway; UMP from uridine: step 1/1. The sequence is that of Uridine kinase from Shewanella pealeana (strain ATCC 700345 / ANG-SQ1).